Reading from the N-terminus, the 448-residue chain is Phosphohexose mutases (448 aa).

The active-site Phosphoserine intermediate is Ser-97. Mg(2+) contacts are provided by Ser-97, Asp-237, Asp-239, and Asp-241.

This sequence belongs to the phosphohexose mutase family. Requires Mg(2+) as cofactor.

It catalyses the reaction alpha-D-glucose 1-phosphate = alpha-D-glucose 6-phosphate. It carries out the reaction alpha-D-mannose 1-phosphate = D-mannose 6-phosphate. It functions in the pathway nucleotide-sugar biosynthesis; GDP-alpha-D-mannose biosynthesis; alpha-D-mannose 1-phosphate from D-fructose 6-phosphate: step 2/2. In terms of biological role, involved in xanthan production. The chain is Phosphohexose mutases (xanA) from Xanthomonas campestris pv. campestris (strain B100).